Consider the following 1071-residue polypeptide: SLIT-ROBO Rho GTPase-activating protein 2 (1071 aa).

Positions 22–325 constitute an F-BAR domain; it reads KEIRAQLTEQ…AVENLDATSD (304 aa). The segment covering 181–203 has biased composition (basic and acidic residues); sequence LKEAEKQEEKQIGKSVKQEDRQT. The interval 181 to 211 is disordered; it reads LKEAEKQEEKQIGKSVKQEDRQTPRSPDSTA. The residue at position 206 (Ser206) is a Phosphoserine. Residues 362 to 401 are a coiled coil; the sequence is VQSELVQRCQQLQSRLSTLKIENEEVKKTMEATLQTIQDI. Phosphoserine is present on residues Ser427, Ser500, Ser691, and Ser695. Residues 489-679 form the Rho-GAP domain; it reads ARRSSTVRKQ…TIIIQHENIF (191 aa). The tract at residues 698-726 is disordered; the sequence is DYCDSPHGETTSVEDSTQDVTAEHHTSDD. Residues 705-717 show a composition bias toward polar residues; the sequence is GETTSVEDSTQDV. Residue Ser724 is modified to Phosphoserine. Positions 728-787 constitute an SH3 domain; sequence CEPIEAIAKFDYVGRTARELSFKKGASLLLYQRASDDWWEGRHNGIDGLIPHQYIVVQDT. Phosphoserine is present on Ser795. The tract at residues 837–936 is disordered; it reads QRKRPESGSI…RSKSFNNHRP (100 aa). Over residues 855–866 the composition is skewed to low complexity; the sequence is HGLSSSLTDSSS. 2 stretches are compositionally biased toward polar residues: residues 874 to 885 and 897 to 907; these read RPSSQPIMSQSL and GHGSLNSISRH. Ser916 bears the Phosphoserine mark. Residues 919 to 933 show a composition bias toward polar residues; the sequence is IRKTATAGRSKSFNN. A Symmetric dimethylarginine; by PRMT5 modification is found at Arg927. Ser930 carries the phosphoserine modification. Residues 940–967 adopt a coiled-coil conformation; it reads EVIAQDIEATMNSALNELRELERQSSVK. The interval 983–1012 is disordered; that stretch reads SPVVAPTSEPSSPLHTQLLKDPEPAFQRSA. Ser990, Ser994, Ser1013, and Ser1027 each carry phosphoserine. Positions 1029–1071 are disordered; it reads KMAAPVKPPATRPKPTVFPKTNATSPGVNSSTSPQSTDKSCTV. Polar residues predominate over residues 1047 to 1071; the sequence is PKTNATSPGVNSSTSPQSTDKSCTV.

As to quaternary structure, homodimer. Heterodimer; forms a heterodimer with SRGAP2C, altering SRGAP2 function. Forms a heterooligomer with SRGAP1 and SRGAP3 through its F-BAR domain. Interacts (via SH3 domain) with GPHN. Interacts (via SH3 domain) with FMNL1 (activated by RAC1); regulates the actin filament severing activity of FMNL1 and actin dynamics. Interacts (via SH3 domain) with FMNL3. Interacts with RAC1; specifically stimulates RAC1 GTPase activity. Interacts (via F-BAR domain) with HOMER1. Interacts with ROBO1 and ROBO2. Interacts with FASLG. Interacts with PRMT5. Post-translationally, methylation at Arg-927 is required for the stimulation of cell migration, dimerization and localization at the plasma membrane protrusions.

It is found in the cell membrane. The protein resides in the cell projection. The protein localises to the dendritic spine. It localises to the postsynaptic density. Its subcellular location is the postsynaptic cell membrane. It is found in the lamellipodium. The protein resides in the cytoplasmic vesicle. The protein localises to the phagosome. It localises to the nucleus. Its subcellular location is the cytoplasm. It is found in the cytosol. Activity is strongly inhibited by SRGAP2C, which heterodimerize with SRGAP2/SRGAP2A, thereby reducing SRGAP2/SRGAP2A levels through proteasome-dependent degradation. Postsynaptic RAC1 GTPase activating protein (GAP) that plays a key role in neuronal morphogenesis and migration mainly during development of the cerebral cortex. Regulates excitatory and inhibitory synapse maturation and density in cortical pyramidal neurons. SRGAP2/SRGAP2A limits excitatory and inhibitory synapse density through its RAC1-specific GTPase activating activity, while it promotes maturation of both excitatory and inhibitory synapses through its ability to bind to the postsynaptic scaffolding protein HOMER1 at excitatory synapses, and the postsynaptic protein GPHN at inhibitory synapses. Mechanistically, acts by binding and deforming membranes, thereby regulating actin dynamics to regulate cell migration and differentiation. Promotes cell repulsion and contact inhibition of locomotion: localizes to protrusions with curved edges and controls the duration of RAC1 activity in contact protrusions. In non-neuronal cells, may also play a role in cell migration by regulating the formation of lamellipodia and filopodia. This Homo sapiens (Human) protein is SLIT-ROBO Rho GTPase-activating protein 2.